The chain runs to 387 residues: Succinate--CoA ligase [ADP-forming] subunit beta (387 aa).

Residues 9 to 236 (KELFAKHNVP…RDATDPLELK (228 aa)) form the ATP-grasp domain. ATP contacts are provided by residues Lys-45, 52 to 54 (GRG), Ser-94, and Glu-99. Residues Asn-191 and Asp-205 each contribute to the Mg(2+) site. Substrate is bound by residues Asn-256 and 318-320 (GIT).

Belongs to the succinate/malate CoA ligase beta subunit family. Heterotetramer of two alpha and two beta subunits. Mg(2+) is required as a cofactor.

The catalysed reaction is succinate + ATP + CoA = succinyl-CoA + ADP + phosphate. The enzyme catalyses GTP + succinate + CoA = succinyl-CoA + GDP + phosphate. It participates in carbohydrate metabolism; tricarboxylic acid cycle; succinate from succinyl-CoA (ligase route): step 1/1. Succinyl-CoA synthetase functions in the citric acid cycle (TCA), coupling the hydrolysis of succinyl-CoA to the synthesis of either ATP or GTP and thus represents the only step of substrate-level phosphorylation in the TCA. The beta subunit provides nucleotide specificity of the enzyme and binds the substrate succinate, while the binding sites for coenzyme A and phosphate are found in the alpha subunit. The protein is Succinate--CoA ligase [ADP-forming] subunit beta of Mycobacterium sp. (strain JLS).